The primary structure comprises 317 residues: Beta-ketoacyl-[acyl-carrier-protein] synthase III (317 aa).

Residues Cys112 and His244 contribute to the active site. The segment at 245 to 249 (QANLR) is ACP-binding. Residue Asn274 is part of the active site.

Belongs to the thiolase-like superfamily. FabH family. In terms of assembly, homodimer.

The protein resides in the cytoplasm. The catalysed reaction is malonyl-[ACP] + acetyl-CoA + H(+) = 3-oxobutanoyl-[ACP] + CO2 + CoA. It participates in lipid metabolism; fatty acid biosynthesis. Its function is as follows. Catalyzes the condensation reaction of fatty acid synthesis by the addition to an acyl acceptor of two carbons from malonyl-ACP. Catalyzes the first condensation reaction which initiates fatty acid synthesis and may therefore play a role in governing the total rate of fatty acid production. Possesses both acetoacetyl-ACP synthase and acetyl transacylase activities. Its substrate specificity determines the biosynthesis of branched-chain and/or straight-chain of fatty acids. The chain is Beta-ketoacyl-[acyl-carrier-protein] synthase III from Pectobacterium atrosepticum (strain SCRI 1043 / ATCC BAA-672) (Erwinia carotovora subsp. atroseptica).